A 190-amino-acid polypeptide reads, in one-letter code: MKINGNEIRPGNVIEHQGSLWVAVKCNAVKPGKGGAFNQVELKNVIDGTKLNERFRAAETVEKVRLEQKDFTFLYQQGEALVFMDTESYEQLELQRDFVGDRAAFLQDGMTVTVELHEEKPLGISLPDQVTVTIAEADPAIKGQTVTSSYKPAILENGIRILVPPFVQAGERIIVDTNELTYIRRVSEKG.

It belongs to the elongation factor P family.

The protein localises to the cytoplasm. Its pathway is protein biosynthesis; polypeptide chain elongation. Its function is as follows. Involved in peptide bond synthesis. Stimulates efficient translation and peptide-bond synthesis on native or reconstituted 70S ribosomes in vitro. Probably functions indirectly by altering the affinity of the ribosome for aminoacyl-tRNA, thus increasing their reactivity as acceptors for peptidyl transferase. In Bartonella bacilliformis (strain ATCC 35685 / KC583 / Herrer 020/F12,63), this protein is Elongation factor P.